The chain runs to 713 residues: Polyribonucleotide nucleotidyltransferase (713 aa).

Aspartate 494 and aspartate 500 together coordinate Mg(2+). A KH domain is found at 561–623 (PSFSTMTIPK…EAVQSAEKRV (63 aa)). The S1 motif domain occupies 633–702 (GDVYQGTVKS…KSGKYKLSRK (70 aa)).

It belongs to the polyribonucleotide nucleotidyltransferase family. It depends on Mg(2+) as a cofactor.

It localises to the cytoplasm. It catalyses the reaction RNA(n+1) + phosphate = RNA(n) + a ribonucleoside 5'-diphosphate. Its function is as follows. Involved in mRNA degradation. Catalyzes the phosphorolysis of single-stranded polyribonucleotides processively in the 3'- to 5'-direction. The sequence is that of Polyribonucleotide nucleotidyltransferase from Amoebophilus asiaticus (strain 5a2).